A 276-amino-acid polypeptide reads, in one-letter code: Undecaprenyl-diphosphatase (276 aa).

5 consecutive transmembrane segments (helical) span residues 85–105 (MNVVIATVPAVALALLFEKTI), 108–128 (VLFAPVPVAVALVVGGAAILW), 187–207 (VATEFSFFLAIPVIFGATLYE), 217–237 (VDSVGLFAIGLVAAFVSAFAC), and 253–273 (FAWYRIAFGLFVLLVGYSGWI).

The protein belongs to the UppP family.

The protein localises to the cell inner membrane. The enzyme catalyses di-trans,octa-cis-undecaprenyl diphosphate + H2O = di-trans,octa-cis-undecaprenyl phosphate + phosphate + H(+). Catalyzes the dephosphorylation of undecaprenyl diphosphate (UPP). Confers resistance to bacitracin. This chain is Undecaprenyl-diphosphatase, found in Burkholderia mallei (strain NCTC 10247).